A 3253-amino-acid chain; its full sequence is MHQPPVRFPYRLLSYLISTIIAGQPLLPAVGAVITPQNGAGMDKAANGVPVVNIATPNGAGISHNRFTDYNVGKEGLILNNATGKLNPTQLGGLIQNNPNLKAGGEAKGIINEVTGGNRSLLQGYTEVAGKAANVMVANPYGITCDGCGFINTPRATLTTGRPVMNADGSLQALEVTEGSITINGAGLDGTRSDAVSIIARATEVNAALHAKDLTVTAGANRVTADGRVSALKGEGDVPKVAVDTGALGGMYARRIHLTSTESGVGVNLGNLYAREGDIILSSSGKLVLKNSLAGGNTTVTGTDVSLSGDNKAGGNLSVTGTTGLTLNQSRLVTDKNLVLSSSGQIVQNGGELTAGQNAMLSAQHLNQTSGAVNAAENVTLTTTGGITLKGRSVAGKTLTVSSGSLNNGGTLGAGRDATVKTGTFSNTGAVQGNGLKVTATDLTSTGSIKSGSTLDISARNATLSGDAGAKDSARVTVSGTLENRGRLVSDDVLTLSATQINNSGTLSGAKELVASADTLTTTEKSVTNSDGNLMLNSASSTLAGETSAGGTVSVKGNSLKTTTTAQTQGNSVSVDVQNAQLDGTQAARDILTLNASEKLTHSGKSSAPSLSLSAPELTSSGVLVASALNTQSQTLTNSGLLQGEASLTVNTQRLDNQQNGTLYSAADLTLDIPDIRNSGLITGDNGLTLNTASLSNPGKITADTLNVRATTLDGDGLLQGAAALALAGDTLSQGSHGRWLTAGDLSLRGKTLNTAGTTQGQNLTVQADRWANSGSVLATGNLTASATGQLTSTGDIMSQGDTTLNAATTDNRGSLLSAGTLSLDGNSLDNSGTVQGNHVTLHHRSTDNSGTVTGLSGLTLHSADGLTNSGALLSQNSLVLSAGDVTNSGRIQGQNITLDASSLTSSGAVQSALDLALTLSGDVIAATGSKITALGDARLTGKVLGNQGLISAKTLEVNGDSLSNSGEISGVNSLNVTLSGNLQQHGKMLTGGALNVNARDISNSGQLQGADNRITASSLANSGRVQGESGLTLTLLNALTNQTSGVLLSQNVSALSAPVLTNDGTIQGNGKTTLSAATQAHNSGKILSGGELTFTTPDYSGSGWLQATDLLLNVAKLAGNGTVMAANQATLTGNSLTNRGLFQAAQLNVNTQTITNSGTLLGNQGLTIKGNNLNNAGGKVFSGGDMLAEMVSLSGAGQLVALGNLTLKLTRGLTAQGVIAANKQLSVSSQGDITNGATLQGNGITLNAAGRLTNNGQLTAGNGTTALSGSGIAMNASGSLQAGGDVSLTSRGDITLDAFTGTTGSLMLTAAGAVINTALLYAGNNLSLFASTIRNHHGDMLAGDSLVMQKDVSGAANAEVINTSGNIETTRGDITIRTGHLLNQREGINETKSYIPVENVAVPDGANSVSVRVGDLGEDGWGYYVKSWSGTAGGGFDAWAVPTEKGATRKFLTGTTRVDVGATGGDARISAGNNLLIDADKLDNTGSHLLASGFVSLSGSQLNNQSFFGYTQDEYNVYRYYGKLAMIPNDGHLQYGDASADDRVTFTLSGAPEYVTRDTGQALRAVIQAGKNVTAVFSSDISNTSTTSNAGRITNTLAAPEINTPAEKNISPRMAQLAPDGTEMLTVTAPDWTDTITRLTIGSGTDLASGIVEGNYPLPSGNNGYFVPSADPDSPYLITVNPKLDGLGKVDSSLFAGLYDLLRMHPGQAPRETDPAYTDEKQFPGSSYFLDRLGLKPEKDYRFLGDAAFDTRYVSNYMLNQIGGRYINGVGSDTDQMRYLMDNAARAQKALGLKFGVALTADQVAALDQSILWYKAVTIKGQTVMVPEVYLSPKDVTLQNGSIISGQNVHLAGGNVTNSGSTLMAQNNLTIDSADSLGNLESGLINAGGALGLKAMGDINNISATITGKTVRLESLAGNVNNLTRYSHWQLDAPEDSLALKHTYTGSIASVSAMDSLDIRADKNISVTGAEISAGDRAALIAGNDLSLNAIDRVSSRRHANSESHQRSAGLTTITAGDSVMLSAGRDVSSQGAGIAAEDNITVRAGRDVNLLAEESVTGSSSYSKKKTVIDETVRQQGAEIASGGDTTITAGRDITAVASSVTATGNISVNAGRDVALTTATESDYHYLETKKKSGGFLSKKTTHTISENSATREAGALLSGNRVTVNAGDNLTVQGSDVVADRDVSLAAGNHVDVLAATSTDTSWRFKETKKSGLMGTGGIGFTIGSSKTTHDRREAGTTQSQSASTIGSTAGNVSITAGKQAHISGSDVIANRDISITGDSVVVDPGHDRRTVDEKFEQKKSGLTVALSGTVGSAINNAVTSAQETKESSDSRLKALQATKTALSGVQAGQAAAMATATGDPNATGVSLSLTTQKSKSQQHSESDTVSGSTLNAGNNLSVVATGKNRGDNRGDIVIAGSQLKAGGNTSLDAANDILLSGAANTQKTTGRNSSSGGGVGVSIGAGKGAGISVFASVNAAKGSEKGNGTEWTETTTDSGKTVTINSGRDTVLNGAQVNGNRIIADVGHDLLISSQQDTSKYDSKQTSVAAGGSFTFGSMTGSGYIAASRDKMKSRFDSVAEQTGMFAGDGGFDITVGRHTQLDGAVIASTATPDKNHLDTGTLGFSDLHNEADYKVSHSGISLSGGGSFGDKFQGNMPGGMISAGGHSGHAEGTTQAAVAEGTITIRDRDNQKQNPADLSRDPAHANDSISPIFDKEKEQRRLQTVGLISDIGSQVADIARTQGELNALKAAKEATGETLPANATEKQRQEYLAKLRDTPEYKKEQEKYGTGSEIQLGIQAATAALQGLAGGNLAGALAGASAPELAHLLKSTEKDPAVNAIAHAILGGAVAAMQGNNVAAGAAGAATGELAARAIAGMLYPGVKQSDLSEEQKQTISTLATVSAGLAGGLTGNSSASAAVGAQSGKNAVDNNYLSVSEKTELEIAKQTLKNSKNPAEREKAQQKYDALLEKDIASDKEVIAACGNGNAGSSACASARLKVIASKEGYEDGPYNSKYSQQYADAYGQIVNLLDITSVDVQNQQQVKDAMVSYFMATLGVDQKTAQGYVETTQGLEIAAASMTPLFGQAVANKITALVDKANKYPSGIGFKINQPEHLAQLDGYSQKKGISGAHNADVFNKAVVDNGVKIISETPTGVRGITQVQYEIPTKDAAGNTTGNYKGNGAKPFEKTIYDPKIFTDEKMLQLGQEAAAIGYSNAIKNGLQAYDAKAGGVTFRVYIDQKTGIVSNFHPK.

Positions 1–32 are cleaved as a signal peptide; sequence MHQPPVRFPYRLLSYLISTIIAGQPLLPAVGA. Residues 36–322 are two-partner system transport domain (TPS); that stretch reads PQNGAGMDKA…AGGNLSVTGT (287 aa). The segment at 351–1384 is FHA-1; that stretch reads GELTAGQNAM…ITIRTGHLLN (1034 aa). The receptor binding domain (RBD) stretch occupies residues 1385-1656; it reads QREGINETKS…DLASGIVEGN (272 aa). Positions 1657–1841 are YP domain; that stretch reads YPLPSGNNGY…LSPKDVTLQN (185 aa). The interval 1842–1902 is periplasmic FHA-1 repeat (pFR); it reads GSIISGQNVH…GLKAMGDINN (61 aa). The FHA-2 stretch occupies residues 1944–2548; the sequence is TYTGSIASVS…TSKYDSKQTS (605 aa). Disordered regions lie at residues 2228-2252, 2362-2410, 2483-2503, and 2687-2712; these read GSSK…TIGS, TGDP…GKNR, GSEK…GKTV, and IRDR…DSIS. Composition is skewed to polar residues over residues 2240 to 2252, 2368 to 2403, and 2490 to 2503; these read GTTQ…TIGS, TGVS…NLSV, and TEWT…GKTV. A pretoxin (PT) domain region spans residues 2888-2930; the sequence is SDLSEEQKQTISTLATVSAGLAGGLTGNSSASAAVGAQSGKNA. Residues 2931–2934 carry the VDNN CT cleavage motif motif; it reads VDNN. The C-terminal effector domain (CT) stretch occupies residues 2931 to 3253; sequence VDNNYLSVSE…TGIVSNFHPK (323 aa).

It in the N-terminal section; belongs to the CdiA toxin family. The protein in the C-terminal section; belongs to the bacterial EndoU family. In terms of assembly, forms a 1:1 complex with cognate immunity protein CdiI-STECO31. TRNase activity is metal-independent. serves as cofactor. In terms of processing, the CT domain is cleaved upon binding to receptor Tsx on target cells.

The protein resides in the secreted. It localises to the target cell. It is found in the target cell cytoplasm. Its function is as follows. Toxic component of a toxin-immunity protein module, which functions as a cellular contact-dependent growth inhibition (CDI) system. CDI modules allow bacteria to communicate with and inhibit the growth of closely related neighboring target bacteria in a contact-dependent fashion (target cell counts decrease 1000- to 10000-fold with this CDI). Uses outer membrane nucleoside transporter Tsx on target cells as a receptor. Gains access to the cytoplasm of target cells by using integral inner membrane protein PTS system glucose-specific EIICB component (ptsG). Targeting of the C-terminal domain (CT) domain (residues 2931-3253) in the absence of immunity protein inhibits cell growth and causes tRNA(UUC-Glu) cleavage; expression of cognate immunity protein CdiI-STECO31 neutralizes growth inhibition leaving tRNA(UUC-Glu) is intact, whereas non-cognate immunity proteins do not confer protection. The CT domain cleaves tRNA; it is most active against tRNA(UUC-Glu), but also has modest activity against tRNA(GUC-Asp), tRNA(UUG-Gln), tRNA(CCC-Gly), tRNA(UCC-Gly), tRNA(GCC-Gly), tRNA(UUU-Lys), tRNA(GGU-Thr) and tRNA(CCA-Trp); tRNA cleavage is inhibited by cognate immunity protein CdiI. Cleavage of tRNA(UUC-Glu) occurs in the anticodon loop between cytosine(37) and 2-methyladenosine(38) (C37-m2A38) and probably also occurs in the anticodon loop of other tRNAs as well. The CdiA protein is thought to be exported from the cell through the central lumen of CdiB, the other half of its two-partner system (TPS). The TPS domain probably remains associated with CdiB while the FHA-1 domain forms an extended filament (33 nm long) with the receptor-binding domain (RBD) at its extremity; in the secretion arrested state the C-terminus of the RBD and YP domains form a hairpin-like structure as the FHA-2, PT and CT domains are periplasmic. The YP domain is probably responsible for this arrest at the point where it re-enters the host cell periplasm. Upon binding to a target cell outer membrane receptor (Tsx for this CDI) a signal is transmitted to activate secretion. The filament becomes about 5 nm longer, the rest of CdiA is secreted and the FHA-2 domain becomes stably associated with the target cell's outer membrane where it facilitates entry of the toxic CT domain into the target cell periplasm. From there the toxic CT domain is cleaved and gains access to the target cell cytoplasm via an inner membrane protein (PTS system glucose-specific EIICB component, ptsG for this CDI). This Escherichia coli (strain STEC_O31) protein is tRNA nuclease CdiA.